Reading from the N-terminus, the 854-residue chain is Cell division control protein 24 (854 aa).

Over residues 1–14 (MAIQTRFASGTSLS) the composition is skewed to polar residues. The segment at 1–24 (MAIQTRFASGTSLSDLKPKPSATS) is disordered. Residues 135–246 (PNMEDTLLTF…VVETLMNSSP (112 aa)) enclose the Calponin-homology (CH) domain. Positions 278-454 (EYVKIIKEFV…KNIARSINEN (177 aa)) constitute a DH domain. Positions 478 to 668 (RISKFGELLY…WSSCLQQLIH (191 aa)) constitute a PH domain. 2 disordered regions span residues 542-571 (ISAS…SNNI) and 674-745 (QFKA…FESE). Low complexity predominate over residues 682-707 (STSTTSSTAKSSSMMSPTTTMNTPNH). The region spanning 761 to 854 (SILFRISYNN…NEKFLNIRLY (94 aa)) is the PB1 domain.

In terms of assembly, interacts with AXL2.

Its function is as follows. Promotes the exchange of CDC42-bound GDP by GTP. Controls the polarity of calmodulin, and the calcium regulatory process of bud emergence. CDC24 may be involved in the initial selection and organization of the budding site. This is Cell division control protein 24 (CDC24) from Saccharomyces cerevisiae (strain ATCC 204508 / S288c) (Baker's yeast).